The following is a 344-amino-acid chain: Dihydroorotase (344 aa).

His13 and His15 together coordinate Zn(2+). Substrate-binding positions include 15 to 17 (HLR) and Asn41. 3 residues coordinate Zn(2+): Lys99, His136, and His174. Lys99 bears the N6-carboxylysine mark. His136 serves as a coordination point for substrate. Leu219 contributes to the substrate binding site. Residue Asp247 coordinates Zn(2+). The active site involves Asp247. 2 residues coordinate substrate: His251 and Ala263.

It belongs to the metallo-dependent hydrolases superfamily. DHOase family. Class II DHOase subfamily. Homodimer. The cofactor is Zn(2+).

The catalysed reaction is (S)-dihydroorotate + H2O = N-carbamoyl-L-aspartate + H(+). Its pathway is pyrimidine metabolism; UMP biosynthesis via de novo pathway; (S)-dihydroorotate from bicarbonate: step 3/3. Functionally, catalyzes the reversible cyclization of carbamoyl aspartate to dihydroorotate. The sequence is that of Dihydroorotase from Microcystis aeruginosa (strain NIES-843 / IAM M-2473).